A 343-amino-acid chain; its full sequence is MDENKKRALSAALSQIEKQFGKGSVMRMGDRVIEAVEVIPTGSLMLDIALGIGGLPKGRVVEIYGPESSGKTTLTLQAIAECQKLGGTAAFIDAEHALDPIYAAKLGVNVDDLLLSQPDTGEQALEIADMLVRSSSVDIVVIDSVAALTPKAEIEGEMGDQLPGLQARLMSQALRKLTGNIKRSNTLVVFINQLRMKIGVMMPGQSPEVTTGGNALKFYASVRLDIRRIGAIKKGDEIIGNQTKIKVVKNKLAPPFKQVITEILYGEGISREGELIDMGVEAKLVDKAGAWYSYGDERIGQGKDNARGYLRDNPQVAIKLEAELREKFQPAEAPREAGETESE.

Residue 65–72 coordinates ATP; that stretch reads GPESSGKT.

The protein belongs to the RecA family.

Its subcellular location is the cytoplasm. Can catalyze the hydrolysis of ATP in the presence of single-stranded DNA, the ATP-dependent uptake of single-stranded DNA by duplex DNA, and the ATP-dependent hybridization of homologous single-stranded DNAs. It interacts with LexA causing its activation and leading to its autocatalytic cleavage. This is Protein RecA from Xanthomonas campestris pv. campestris (strain 8004).